The following is an 85-amino-acid chain: Protein Vpu (85 aa).

The Extracellular portion of the chain corresponds to 1-7 (MHQENLL). A helical transmembrane segment spans residues 8–28 (ALIALSALCLINVLIWLFNLR). Residues 29–85 (IYLVQRKQDRREQEILERLRRIKEIRDDSDYESNEEEQQEVMELIHSHGFANPMFEL) are Cytoplasmic-facing.

It belongs to the HIV-1 VPU protein family. Homopentamer. Interacts with host CD4 and BRTC; these interactions induce proteasomal degradation of CD4. Interacts with host BST2; this interaction leads to the degradation of host BST2. Interacts with host FBXW11. Interacts with host AP1M1; this interaction plays a role in the mistrafficking and subsequent degradation of host BST2. Interacts with host RANBP2; this interaction allows Vpu to down-regulate host BLM sumoylation. Post-translationally, phosphorylated by host CK2. This phosphorylation is necessary for interaction with human BTRC and degradation of CD4.

Its subcellular location is the host membrane. Its activity is regulated as follows. Ion channel activity is inhibited by hexamethylene amiloride in vitro. Its function is as follows. Enhances virion budding by targeting host CD4 and Tetherin/BST2 to proteasome degradation. Degradation of CD4 prevents any unwanted premature interactions between viral Env and its host receptor CD4 in the endoplasmic reticulum. Degradation of antiretroviral protein Tetherin/BST2 is important for virion budding, as BST2 tethers new viral particles to the host cell membrane. Mechanistically, Vpu bridges either CD4 or BST2 to BTRC, a substrate recognition subunit of the Skp1/Cullin/F-box protein E3 ubiquitin ligase, induces their ubiquitination and subsequent proteasomal degradation. The alteration of the E3 ligase specificity by Vpu seems to promote the degradation of host IKBKB, leading to NF-kappa-B down-regulation and subsequent apoptosis. Acts as a viroporin that forms an oligomeric ion channel in membranes. Modulates the host DNA repair mechanisms to promote degradation of nuclear viral cDNA in cells that are already productively infected in order to suppress immune sensing and proviral hyper-integration (superinfection). Manipulates PML-NBs and modulates SUMOylation of host BLM protein thereby enhancing its DNA-end processing activity toward viral unintegrated linear DNA. Also inhibits RAD52-mediated homologous repair of viral cDNA, preventing the generation of dead-end circular forms of single copies of the long terminal repeat and permitting sustained nucleolytic attack. This chain is Protein Vpu, found in Human immunodeficiency virus type 1 group O (isolate MVP5180) (HIV-1).